Consider the following 953-residue polypeptide: Eukaryotic translation initiation factor 3 subunit A (953 aa).

Residues leucine 323 to histidine 504 form the PCI domain. Coiled coils occupy residues glutamine 593 to alanine 642, methionine 670 to phenylalanine 704, and glutamate 732 to arginine 877. The tract at residues isoleucine 603 to arginine 623 is disordered. 2 disordered regions span residues glutamate 810–arginine 861 and glycine 893–serine 953. Basic and acidic residues-rich tracts occupy residues lysine 812–arginine 861, glycine 895–aspartate 919, and tryptophan 928–serine 953.

This sequence belongs to the eIF-3 subunit A family. Component of the eukaryotic translation initiation factor 3 (eIF-3) complex.

The protein resides in the cytoplasm. In terms of biological role, RNA-binding component of the eukaryotic translation initiation factor 3 (eIF-3) complex, which is involved in protein synthesis of a specialized repertoire of mRNAs and, together with other initiation factors, stimulates binding of mRNA and methionyl-tRNAi to the 40S ribosome. The eIF-3 complex specifically targets and initiates translation of a subset of mRNAs involved in cell proliferation. This is Eukaryotic translation initiation factor 3 subunit A from Nematostella vectensis (Starlet sea anemone).